The primary structure comprises 235 residues: Large ribosomal subunit protein uL1 (235 aa).

It belongs to the universal ribosomal protein uL1 family. In terms of assembly, part of the 50S ribosomal subunit.

In terms of biological role, binds directly to 23S rRNA. The L1 stalk is quite mobile in the ribosome, and is involved in E site tRNA release. Protein L1 is also a translational repressor protein, it controls the translation of the L11 operon by binding to its mRNA. This Methylobacterium nodulans (strain LMG 21967 / CNCM I-2342 / ORS 2060) protein is Large ribosomal subunit protein uL1.